A 110-amino-acid polypeptide reads, in one-letter code: Protein YcgL (110 aa).

The YcgL domain occupies 14–98; the sequence is MFCVIYRSSK…PPEDLLKQHL (85 aa). Residues 88-110 are disordered; that stretch reads PPPEDLLKQHLSSVGQNTSPADR. Residues 97 to 110 show a composition bias toward polar residues; sequence HLSSVGQNTSPADR.

In Salmonella paratyphi A (strain ATCC 9150 / SARB42), this protein is Protein YcgL.